Reading from the N-terminus, the 135-residue chain is NAD(P)H-quinone oxidoreductase subunit 3 (135 aa).

The next 3 helical transmembrane spans lie at 15 to 35 (LMFV…AAAV), 79 to 99 (MFAL…PWAV), and 104 to 124 (LGLL…VALA).

It belongs to the complex I subunit 3 family. NDH-1 can be composed of about 15 different subunits; different subcomplexes with different compositions have been identified which probably have different functions.

It is found in the cellular thylakoid membrane. It carries out the reaction a plastoquinone + NADH + (n+1) H(+)(in) = a plastoquinol + NAD(+) + n H(+)(out). The enzyme catalyses a plastoquinone + NADPH + (n+1) H(+)(in) = a plastoquinol + NADP(+) + n H(+)(out). Its function is as follows. NDH-1 shuttles electrons from an unknown electron donor, via FMN and iron-sulfur (Fe-S) centers, to quinones in the respiratory and/or the photosynthetic chain. The immediate electron acceptor for the enzyme in this species is believed to be plastoquinone. Couples the redox reaction to proton translocation, and thus conserves the redox energy in a proton gradient. Cyanobacterial NDH-1 also plays a role in inorganic carbon-concentration. In Synechococcus sp. (strain CC9311), this protein is NAD(P)H-quinone oxidoreductase subunit 3.